The following is a 283-amino-acid chain: Phosphatidylserine decarboxylase proenzyme (283 aa).

Catalysis depends on charge relay system; for autoendoproteolytic cleavage activity residues aspartate 89, histidine 146, and serine 249. Catalysis depends on serine 249, which acts as the Schiff-base intermediate with substrate; via pyruvic acid; for decarboxylase activity. Serine 249 is subject to Pyruvic acid (Ser); by autocatalysis.

It belongs to the phosphatidylserine decarboxylase family. PSD-B subfamily. Prokaryotic type I sub-subfamily. In terms of assembly, heterodimer of a large membrane-associated beta subunit and a small pyruvoyl-containing alpha subunit. It depends on pyruvate as a cofactor. In terms of processing, is synthesized initially as an inactive proenzyme. Formation of the active enzyme involves a self-maturation process in which the active site pyruvoyl group is generated from an internal serine residue via an autocatalytic post-translational modification. Two non-identical subunits are generated from the proenzyme in this reaction, and the pyruvate is formed at the N-terminus of the alpha chain, which is derived from the carboxyl end of the proenzyme. The autoendoproteolytic cleavage occurs by a canonical serine protease mechanism, in which the side chain hydroxyl group of the serine supplies its oxygen atom to form the C-terminus of the beta chain, while the remainder of the serine residue undergoes an oxidative deamination to produce ammonia and the pyruvoyl prosthetic group on the alpha chain. During this reaction, the Ser that is part of the protease active site of the proenzyme becomes the pyruvoyl prosthetic group, which constitutes an essential element of the active site of the mature decarboxylase.

It localises to the cell membrane. The catalysed reaction is a 1,2-diacyl-sn-glycero-3-phospho-L-serine + H(+) = a 1,2-diacyl-sn-glycero-3-phosphoethanolamine + CO2. The protein operates within phospholipid metabolism; phosphatidylethanolamine biosynthesis; phosphatidylethanolamine from CDP-diacylglycerol: step 2/2. In terms of biological role, catalyzes the formation of phosphatidylethanolamine (PtdEtn) from phosphatidylserine (PtdSer). This is Phosphatidylserine decarboxylase proenzyme from Legionella pneumophila subsp. pneumophila (strain Philadelphia 1 / ATCC 33152 / DSM 7513).